The sequence spans 90 residues: Large ribosomal subunit protein bL27 (90 aa).

Residues methionine 1–arginine 20 are disordered.

Belongs to the bacterial ribosomal protein bL27 family.

The sequence is that of Large ribosomal subunit protein bL27 from Nitrobacter hamburgensis (strain DSM 10229 / NCIMB 13809 / X14).